We begin with the raw amino-acid sequence, 1349 residues long: Spike glycoprotein (1349 aa).

Residues 1-13 (MFFILLITLPSVF) form the signal peptide. Topologically, residues 14–1293 (AVIGDLKCNT…GTYEYYVKWP (1280 aa)) are extracellular. The BetaCoV S1-NTD domain occupies 15 to 298 (VIGDLKCNTS…DFMSEIMCKT (284 aa)). Cystine bridges form between Cys-21–Cys-165, Cys-160–Cys-193, Cys-172–Cys-252, Cys-286–Cys-296, Cys-331–Cys-356, Cys-374–Cys-427, and Cys-386–Cys-601. Asn-22, Asn-59, and Asn-133 each carry an N-linked (GlcNAc...) asparagine; by host glycan. The N-linked (GlcNAc...) asparagine; by host glycan is linked to Asn-198. Positions 329–603 (PNCDIEAWLN…DVNSGTTCST (275 aa)) constitute a BetaCoV S1-CTD domain. Asn-437, Asn-456, Asn-512, Asn-611, Asn-635, Asn-662, Asn-682, Asn-700, Asn-725, Asn-774, and Asn-881 each carry an N-linked (GlcNAc...) asparagine; by host glycan. 2 fusion peptide regions span residues 900–921 (SAIEDLLFDKVKLSDVGFVQAY) and 919–939 (QAYNNCTGGAEIRDLICVQSY). Asn-923 carries N-linked (GlcNAc...) asparagine; by host glycosylation. Cysteines 924 and 935 form a disulfide. The segment at 1000–1050 (QKLIASAFNNALDSIQEGFDATNSALVKIQAVVNANAEALNNLLQQLSNRF) is heptad repeat 1. Positions 1029 to 1073 (QAVVNANAEALNNLLQQLSNRFGAISASLQEILSRLDALEAKAQI) form a coiled coil. N-linked (GlcNAc...) asparagine; by host glycans are attached at residues Asn-1180, Asn-1210, Asn-1220, Asn-1239, Asn-1253, and Asn-1274. The interval 1244-1282 (APDLSFDYINVTFLDLQDEMNRLQEAIKVLNHSYINLKD) is heptad repeat 2. Residues 1255 to 1283 (TFLDLQDEMNRLQEAIKVLNHSYINLKDI) are a coiled coil. A helical membrane pass occupies residues 1294-1314 (WYVWLLICLAGVVMLVLLFFI). Topologically, residues 1315 to 1349 (CCCTGCGTSCFKKCGGCFDDYTGHQEFVIKTSHDD) are cytoplasmic. Positions 1345–1349 (TSHDD) match the KxHxx motif.

This sequence belongs to the betacoronaviruses spike protein family. As to quaternary structure, homotrimer; each monomer consists of a S1 and a S2 subunit. The resulting peplomers protrude from the virus surface as spikes. Specific enzymatic cleavages in vivo yield mature proteins. The precursor is processed into S1 and S2 by host cell furin or another cellular protease to yield the mature S1 and S2 proteins. Additionally, a second cleavage leads to the release of a fusion peptide after viral attachment to host cell receptor. Post-translationally, the cytoplasmic Cys-rich domain is palmitoylated. Spike glycoprotein is digested within host endosomes.

The protein localises to the virion membrane. The protein resides in the host endoplasmic reticulum-Golgi intermediate compartment membrane. It is found in the host cell membrane. In terms of biological role, attaches the virion to the cell membrane by interacting with host receptor, initiating the infection. Functionally, mediates fusion of the virion and cellular membranes by acting as a class I viral fusion protein. Under the current model, the protein has at least three conformational states: pre-fusion native state, pre-hairpin intermediate state, and post-fusion hairpin state. During viral and target cell membrane fusion, the coiled coil regions (heptad repeats) assume a trimer-of-hairpins structure, positioning the fusion peptide in close proximity to the C-terminal region of the ectodomain. The formation of this structure appears to drive apposition and subsequent fusion of viral and target cell membranes. Acts as a viral fusion peptide which is unmasked following S2 cleavage occurring upon virus endocytosis. The polypeptide is Spike glycoprotein (Porcine hemagglutinating encephalomyelitis virus (strain IAF-404) (HEV)).